The primary structure comprises 187 residues: Adenine phosphoribosyltransferase (187 aa).

The protein belongs to the purine/pyrimidine phosphoribosyltransferase family. As to quaternary structure, homodimer.

The protein localises to the cytoplasm. It catalyses the reaction AMP + diphosphate = 5-phospho-alpha-D-ribose 1-diphosphate + adenine. The protein operates within purine metabolism; AMP biosynthesis via salvage pathway; AMP from adenine: step 1/1. Functionally, catalyzes a salvage reaction resulting in the formation of AMP, that is energically less costly than de novo synthesis. This Yersinia enterocolitica serotype O:8 / biotype 1B (strain NCTC 13174 / 8081) protein is Adenine phosphoribosyltransferase.